The primary structure comprises 317 residues: Probable cell division protein WhiA (317 aa).

Positions 275–308 form a DNA-binding region, H-T-H motif; sequence SLKELGEMLVPKVGKSGVNHRMRKIDELAEKLEE.

This sequence belongs to the WhiA family.

Functionally, involved in cell division and chromosome segregation. This is Probable cell division protein WhiA from Desulfitobacterium hafniense (strain Y51).